The chain runs to 562 residues: Serine palmitoyltransferase 2 (562 aa).

Residues 61-81 (LITYLNYLILIILGHIHDFLG) traverse the membrane as a helical segment. Position 365 is an N6-(pyridoxal phosphate)lysine (Lys365).

Belongs to the class-II pyridoxal-phosphate-dependent aminotransferase family. The cofactor is pyridoxal 5'-phosphate.

The protein localises to the membrane. The catalysed reaction is L-serine + hexadecanoyl-CoA + H(+) = 3-oxosphinganine + CO2 + CoA. It participates in lipid metabolism; sphingolipid metabolism. In Kluyveromyces lactis (strain ATCC 8585 / CBS 2359 / DSM 70799 / NBRC 1267 / NRRL Y-1140 / WM37) (Yeast), this protein is Serine palmitoyltransferase 2 (LCB2).